Reading from the N-terminus, the 204-residue chain is MEFVAHAAAPDSPHSDSGGGGGGMATGATSASAAGASPSRYESQKRRDWNTFGQYLRNHRPPLSLARCSGAHVLEFLRYLDQFGKTKVHAPACPFFGHPAPPAPCPCPLRQAWGSLDALVGRLRAAYEENGGRPENNPFGARAVRLYLREVREHQARARGVSYEKKKRKKPPHPSSAAAAHDDAANGALHHHHHMPPPPPGAAA.

2 disordered regions span residues 1–45 (MEFV…ESQK) and 157–204 (RARG…GAAA). Over residues 26 to 39 (TGATSASAAGASPS) the composition is skewed to low complexity. The 128-residue stretch at 40–167 (RYESQKRRDW…ARGVSYEKKK (128 aa)) folds into the ALOG domain. The Nuclear localization signal signature appears at 165–169 (KKKRK).

This sequence belongs to the plant homeotic and developmental regulators ALOG protein family.

It localises to the nucleus. Its function is as follows. Probable transcription regulator that acts as a developmental regulator by promoting cell growth in response to light. The sequence is that of Protein G1-like5 (G1L5) from Oryza sativa subsp. japonica (Rice).